Here is an 809-residue protein sequence, read N- to C-terminus: Protein TRC8 homolog (809 aa).

Helical transmembrane passes span 124-144 (TVKF…FMLW), 147-167 (HLVM…SYWS), 200-220 (VMSL…FAYI), 233-253 (MPII…AKVV), 256-276 (LPVV…MQSA), 350-370 (LVDG…ISMF), 392-412 (LGTV…LTSL), 425-445 (LCLL…PILM), 461-481 (ALSV…HLWS), 488-508 (WLLA…VSLA), and 539-559 (SVEF…LIFE). The RING-type; atypical zinc finger occupies 621–659 (CAICYQEMYSAKITRCRHFFHGVCLRKWLYVQDRCPLCH). Disordered regions lie at residues 696 to 724 (NNAA…SSSA) and 752 to 788 (VASS…TSAA). Residues 711–724 (EASEQAPATSSSSA) show a composition bias toward low complexity.

As to quaternary structure, interacts with VHL. Interacts with the MPN domain of CSN5. Interacts with EIF3F and EIF3H.

The protein localises to the endoplasmic reticulum membrane. In terms of biological role, plays a role in growth inhibition that is dependent upon COP9 signalosome subunits CSN5 and CSN6. May modulate signalosome levels or compartmentalization. Probably functions in the same or a related pathway to VHL during early midline development. The sequence is that of Protein TRC8 homolog from Drosophila melanogaster (Fruit fly).